The chain runs to 204 residues: Transcriptional regulator GfcR 1 (204 aa).

The protein belongs to the purine/pyrimidine phosphoribosyltransferase family. GfcR subfamily.

This chain is Transcriptional regulator GfcR 1, found in Methanosarcina barkeri (strain Fusaro / DSM 804).